The primary structure comprises 307 residues: Porphobilinogen deaminase (307 aa).

C239 is subject to S-(dipyrrolylmethanemethyl)cysteine.

Belongs to the HMBS family. In terms of assembly, monomer. Dipyrromethane is required as a cofactor.

The catalysed reaction is 4 porphobilinogen + H2O = hydroxymethylbilane + 4 NH4(+). Its pathway is porphyrin-containing compound metabolism; protoporphyrin-IX biosynthesis; coproporphyrinogen-III from 5-aminolevulinate: step 2/4. Tetrapolymerization of the monopyrrole PBG into the hydroxymethylbilane pre-uroporphyrinogen in several discrete steps. The polypeptide is Porphobilinogen deaminase (hemC) (Campylobacter jejuni subsp. jejuni serotype O:2 (strain ATCC 700819 / NCTC 11168)).